A 74-amino-acid chain; its full sequence is Insertion element IS986 uncharacterized 8.2 kDa protein (74 aa).

This Mycobacterium tuberculosis protein is Insertion element IS986 uncharacterized 8.2 kDa protein.